A 579-amino-acid chain; its full sequence is Probable serine/threonine-protein kinase kinY (579 aa).

Residues 1–24 are disordered; it reads MINGEQTMVEDELPDQGKPMSDES. Positions 32 to 309 constitute a Protein kinase domain; the sequence is LKVGESIGSG…HVLKQLTSLF (278 aa). Residues 38 to 46 and Lys59 each bind ATP; that span reads IGSGAYGIV. Residue Asp167 is the Proton acceptor of the active site.

The protein belongs to the protein kinase superfamily. TKL Ser/Thr protein kinase family.

It catalyses the reaction L-seryl-[protein] + ATP = O-phospho-L-seryl-[protein] + ADP + H(+). The enzyme catalyses L-threonyl-[protein] + ATP = O-phospho-L-threonyl-[protein] + ADP + H(+). This chain is Probable serine/threonine-protein kinase kinY (kinY), found in Dictyostelium discoideum (Social amoeba).